The chain runs to 475 residues: MAAGTLRGLAVAGGGESSDSEDDGWDIGYLDRSSQKLKRSLPVEEKNETFKKALTTGDISLVKELLDSGINVDSSFRYGWTPLMYAASVANAELVRFLLDRGANASFDKDKLTILISACSARGSEEQVLKCVELLLSRNADPNTACRRLMTPIMYAARDGHTQVVALLVAHGAEVNAQDENGYTALTWAARQGHKNVILKLLELGANKMLQTKDGRTPSEIAKRNKHLEIFNFLSLTLNPLEGKLQQLTKEETICKLLATDSDKEKDHIFSPYTAFGDLEIFLHGLGLEHMTDSLKEKDITLRHLLTMKKDELTKNGIASKDQQKILAALKELEVEEINFGKLPEVTKLEISGDEFLNFLLKLNKQCGHLITAVQNIITELPVNSHKIVLEWASPRNFTSVCEELVSNVEDLNEEVCRLKELIQKMQNERENDPTHIPLVEEVSTWKTRILKRSAVTVCGFGLLLFIGKLTLQRK.

The segment at 1–25 (MAAGTLRGLAVAGGGESSDSEDDGW) is disordered. 3 positions are modified to phosphoserine: S17, S18, and S20. 6 ANK repeats span residues 45 to 74 (EKNE…NVDS), 78 to 107 (YGWT…NASF), 110 to 144 (DKLT…DPNT), 148 to 177 (RLMT…EVNA), 181 to 210 (NGYT…NKML), and 214 to 243 (DGRT…PLEG). The SAM domain occupies 272–334 (PYTAFGDLEI…KILAALKELE (63 aa)).

In terms of assembly, interacts with DDX4, PIWIL1, RANBP9 and TDRD1. In terms of tissue distribution, expressed exclusively in testis and ovary with higher levels in testis.

The protein resides in the cytoplasm. Functionally, plays a central role during spermatogenesis by repressing transposable elements and preventing their mobilization, which is essential for the germline integrity. Acts via the piRNA metabolic process, which mediates the repression of transposable elements during meiosis by forming complexes composed of piRNAs and Piwi proteins and governs the methylation and subsequent repression of transposons. Its association with pi-bodies suggests a participation in the primary piRNAs metabolic process. Required prior to the pachytene stage to facilitate the production of multiple types of piRNAs, including those associated with repeats involved in regulation of retrotransposons. May act by mediating protein-protein interactions during germ cell maturation. The protein is Ankyrin repeat, SAM and basic leucine zipper domain-containing protein 1 of Mus musculus (Mouse).